The following is a 913-amino-acid chain: Eukaryotic translation initiation factor 3 subunit C (913 aa).

The disordered stretch occupies residues 1-44 (MSRFFTTGSDSESESSLSGEELVTKPVGGNYGKQPLLLSEDEED). Over residues 8–21 (GSDSESESSLSGEE) the composition is skewed to low complexity. Phosphoserine occurs at positions 9, 11, 13, 15, 16, 18, and 39. At Lys-99 the chain carries N6-acetyllysine. Disordered regions lie at residues 157 to 301 (TSYK…GGEW) and 522 to 542 (QLTPPEGSSKSEQDQAENEGE). Phosphoserine is present on residues Ser-166, Ser-178, Ser-181, and Ser-182. Residues 166–190 (SADEDAEKNEEDSEGSSDEDEDEDG) show a composition bias toward acidic residues. Basic and acidic residues predominate over residues 199 to 216 (KKSEAPSGESRKFLKKMD). Residues 217–232 (DEDEDSEDSEDDEDWD) show a composition bias toward acidic residues. A compositionally biased stretch (basic and acidic residues) spans 261-278 (PTTDEDKKAAEKKREDKA). The span at 522 to 531 (QLTPPEGSSK) shows a compositional bias: polar residues. Thr-524 is modified (phosphothreonine). Lys-643 is modified (N6-acetyllysine). One can recognise a PCI domain in the interval 673–849 (FHLHINLELL…QTVVMHRTEP (177 aa)). Residues 885–913 (FRDQKDGYRKNEGYMRRGGYRQQQSQTAY) are disordered. Positions 886–899 (RDQKDGYRKNEGYM) are enriched in basic and acidic residues. Ser-909 carries the post-translational modification Phosphoserine.

Component of the eukaryotic translation initiation factor 3 (eIF-3) complex, which is composed of 13 subunits: EIF3A, EIF3B, EIF3C, EIF3D, EIF3E, EIF3F, EIF3G, EIF3H, EIF3I, EIF3J, EIF3K, EIF3L and EIF3M. The eIF-3 complex appears to include 3 stable modules: module A is composed of EIF3A, EIF3B, EIF3G and EIF3I; module B is composed of EIF3F, EIF3H, and EIF3M; and module C is composed of EIF3C, EIF3D, EIF3E, EIF3K and EIF3L. EIF3C of module C binds EIF3B of module A and EIF3H of module B, thereby linking the three modules. EIF3J is a labile subunit that binds to the eIF-3 complex via EIF3B. The eIF-3 complex interacts with RPS6KB1 under conditions of nutrient depletion. Mitogenic stimulation leads to binding and activation of a complex composed of MTOR and RPTOR, leading to phosphorylation and release of RPS6KB1 and binding of EIF4B to eIF-3. Identified in a HCV IRES-mediated translation complex, at least composed of EIF3C, IGF2BP1, RPS3 and HCV RNA-replicon. Interacts with ALKBH4, IFIT1 and IFIT2. Interacts with BZW2/5MP1. Post-translationally, phosphorylated. Phosphorylation is enhanced upon serum stimulation.

It is found in the cytoplasm. Functionally, component of the eukaryotic translation initiation factor 3 (eIF-3) complex, which is required for several steps in the initiation of protein synthesis. The eIF-3 complex associates with the 40S ribosome and facilitates the recruitment of eIF-1, eIF-1A, eIF-2:GTP:methionyl-tRNAi and eIF-5 to form the 43S pre-initiation complex (43S PIC). The eIF-3 complex stimulates mRNA recruitment to the 43S PIC and scanning of the mRNA for AUG recognition. The eIF-3 complex is also required for disassembly and recycling of post-termination ribosomal complexes and subsequently prevents premature joining of the 40S and 60S ribosomal subunits prior to initiation. The eIF-3 complex specifically targets and initiates translation of a subset of mRNAs involved in cell proliferation, including cell cycling, differentiation and apoptosis, and uses different modes of RNA stem-loop binding to exert either translational activation or repression. In Homo sapiens (Human), this protein is Eukaryotic translation initiation factor 3 subunit C.